A 449-amino-acid chain; its full sequence is Sulfite exporter TauE/SafE family protein 5 (449 aa).

Helical transmembrane passes span 1–21 (MKTL…NANQ), 57–77 (AIIM…AGGI), 78–98 (GGGG…LKTA), 101–121 (FSAF…LFGG), 127–147 (YDLA…GVIC), 150–170 (VLPE…SSLK), 224–244 (IPWT…VIYL), 259–279 (PCGV…LIFT), 315–335 (AMSF…GMLI), 353–373 (TSFM…LLGM), 378–398 (TAYV…VLVQ), and 409–429 (IIVF…TSFG).

This sequence belongs to the 4-toluene sulfonate uptake permease (TSUP) (TC 2.A.102) family.

The protein localises to the membrane. The polypeptide is Sulfite exporter TauE/SafE family protein 5 (Arabidopsis thaliana (Mouse-ear cress)).